The following is a 209-amino-acid chain: MIAIIDYGMGNIRSVEQALKYIGAAYIVTSDKEEIFRSDGVILPGVGAFPKAMDILEEKDLVRVLQEIGRSRKPLLGICLGMQLLFEKSEELQDCNGLSLLPGVIRKLKVPYKIPHMGWNELKKEGEIALWNGVEDGSFVYYVHSYYADCPNEIVYGISDYGVKVPGFVAKGNIYGAQFHPEKSGDIGMQMLKNFKGVVETWKSSQLSI.

Positions 1 to 205 (MIAIIDYGMG…KGVVETWKSS (205 aa)) constitute a Glutamine amidotransferase type-1 domain. Cys-79 serves as the catalytic Nucleophile. Residues His-180 and Glu-182 contribute to the active site.

In terms of assembly, heterodimer of HisH and HisF.

The protein localises to the cytoplasm. The enzyme catalyses 5-[(5-phospho-1-deoxy-D-ribulos-1-ylimino)methylamino]-1-(5-phospho-beta-D-ribosyl)imidazole-4-carboxamide + L-glutamine = D-erythro-1-(imidazol-4-yl)glycerol 3-phosphate + 5-amino-1-(5-phospho-beta-D-ribosyl)imidazole-4-carboxamide + L-glutamate + H(+). It carries out the reaction L-glutamine + H2O = L-glutamate + NH4(+). It participates in amino-acid biosynthesis; L-histidine biosynthesis; L-histidine from 5-phospho-alpha-D-ribose 1-diphosphate: step 5/9. Functionally, IGPS catalyzes the conversion of PRFAR and glutamine to IGP, AICAR and glutamate. The HisH subunit catalyzes the hydrolysis of glutamine to glutamate and ammonia as part of the synthesis of IGP and AICAR. The resulting ammonia molecule is channeled to the active site of HisF. This chain is Imidazole glycerol phosphate synthase subunit HisH, found in Bacillus anthracis (strain A0248).